Reading from the N-terminus, the 96-residue chain is Cell division protein FtsB (96 aa).

Residues M1 to I11 lie on the Cytoplasmic side of the membrane. The chain crosses the membrane as a helical span at residues F12–F29. The Periplasmic segment spans residues S30–K96.

This sequence belongs to the FtsB family. In terms of assembly, part of a complex composed of FtsB, FtsL and FtsQ.

The protein localises to the cell inner membrane. In terms of biological role, essential cell division protein. May link together the upstream cell division proteins, which are predominantly cytoplasmic, with the downstream cell division proteins, which are predominantly periplasmic. The protein is Cell division protein FtsB of Francisella tularensis subsp. tularensis (strain SCHU S4 / Schu 4).